We begin with the raw amino-acid sequence, 547 residues long: Signal recognition particle receptor subunit alpha homolog (547 aa).

The interval 124–174 (LENETDTKSLPVEANNDNSARKKNEYEMKKKGAQSKQTNAPKKGKKQLRKW) is disordered. Residues 142–153 (SARKKNEYEMKK) show a composition bias toward basic and acidic residues. The tract at residues 343-546 (YTISLIGVNG…SVDWVVDQLM (204 aa)) is NG domain. GTP contacts are provided by residues 349–356 (GVNGVGKS), 437–441 (DTAGR), and 498–501 (SKVD).

This sequence belongs to the GTP-binding SRP family. Heterodimer of an alpha and a beta chain.

It is found in the endoplasmic reticulum membrane. In terms of biological role, component of the SRP (signal recognition particle) receptor (SR). Ensures, in conjunction with the signal recognition particle, the correct targeting of the nascent secretory proteins to the endoplasmic reticulum membrane system. GTP hydrolysis may enhance the fidelity of and provide unidirectionality to the targeting reaction. In Schizosaccharomyces pombe (strain 972 / ATCC 24843) (Fission yeast), this protein is Signal recognition particle receptor subunit alpha homolog (srp101).